The sequence spans 851 residues: Probable alpha,alpha-trehalose-phosphate synthase [UDP-forming] 7 (851 aa).

A Phosphoserine modification is found at serine 5. Phosphothreonine is present on threonine 32. The tract at residues 59–540 (DRMIIVANRL…SRSFLQDLER (482 aa)) is glycosyltransferase.

This sequence in the N-terminal section; belongs to the glycosyltransferase 20 family. The protein in the C-terminal section; belongs to the trehalose phosphatase family. Binds to the phosphopeptide-binding site of GRF/14-3-3. In terms of processing, phosphorylated. Expressed in seedlings, leaves, roots, stems, flowers and siliques.

The catalysed reaction is D-glucose 6-phosphate + UDP-alpha-D-glucose = alpha,alpha-trehalose 6-phosphate + UDP + H(+). The chain is Probable alpha,alpha-trehalose-phosphate synthase [UDP-forming] 7 (TPS7) from Arabidopsis thaliana (Mouse-ear cress).